A 663-amino-acid chain; its full sequence is Drug sensory protein A (663 aa).

The next 3 helical transmembrane spans lie at 32-52 (LMAAATLVVSLLMSGLTFWAV), 165-185 (VFIPLQYQGKFLGVLAIGINP), and 199-219 (VTIAVFISIWVMVILGAVFNA). The HAMP domain maps to 220-272 (LTITQPIKELLLGVKNIAAGNFKQRITLPFGGELGELIVNFNEMAERLERYEA). Residues 281 to 351 (EKAKLDTLVS…QPLRELAADQ (71 aa)) enclose the PAS domain. The Histidine kinase domain occupies 429 to 656 (NVSHELRTPL…TFWFDLAVYQ (228 aa)). At His-432 the chain carries Phosphohistidine; by autocatalysis.

The protein localises to the cell membrane. The enzyme catalyses ATP + protein L-histidine = ADP + protein N-phospho-L-histidine.. The chain is Drug sensory protein A (dspA) from Synechocystis sp. (strain ATCC 27184 / PCC 6803 / Kazusa).